The chain runs to 23 residues: Benzaldehyde dehydrogenase [NAD(+)] I (23 aa).

This sequence belongs to the aldehyde dehydrogenase family. As to quaternary structure, homotetramer.

The enzyme catalyses benzaldehyde + NAD(+) + H2O = benzoate + NADH + 2 H(+). This chain is Benzaldehyde dehydrogenase [NAD(+)] I, found in Acinetobacter guillouiae (Acinetobacter genomosp. 11).